A 311-amino-acid chain; its full sequence is F-box protein At3g18320 (311 aa).

Residues 1 to 46 form the F-box domain; it reads MTLPELPKDLVEEILCFVPATSLKRLRSTCKGWNRLFKDDKRFARK.

This is F-box protein At3g18320 from Arabidopsis thaliana (Mouse-ear cress).